Here is a 288-residue protein sequence, read N- to C-terminus: Acetyl-coenzyme A carboxylase carboxyl transferase subunit beta (288 aa).

Positions 34-288 (LFAKCPACKH…HLVAFHGGVS (255 aa)) constitute a CoA carboxyltransferase N-terminal domain. Residues Cys-38, Cys-41, Cys-56, and Cys-59 each contribute to the Zn(2+) site. The C4-type zinc-finger motif lies at 38 to 59 (CPACKHMIYQKDLGPAKICPTC).

This sequence belongs to the AccD/PCCB family. Acetyl-CoA carboxylase is a heterohexamer composed of biotin carboxyl carrier protein (AccB), biotin carboxylase (AccC) and two subunits each of ACCase subunit alpha (AccA) and ACCase subunit beta (AccD). It depends on Zn(2+) as a cofactor.

It is found in the cytoplasm. It catalyses the reaction N(6)-carboxybiotinyl-L-lysyl-[protein] + acetyl-CoA = N(6)-biotinyl-L-lysyl-[protein] + malonyl-CoA. It functions in the pathway lipid metabolism; malonyl-CoA biosynthesis; malonyl-CoA from acetyl-CoA: step 1/1. In terms of biological role, component of the acetyl coenzyme A carboxylase (ACC) complex. Biotin carboxylase (BC) catalyzes the carboxylation of biotin on its carrier protein (BCCP) and then the CO(2) group is transferred by the transcarboxylase to acetyl-CoA to form malonyl-CoA. The sequence is that of Acetyl-coenzyme A carboxylase carboxyl transferase subunit beta from Streptococcus equi subsp. zooepidemicus (strain MGCS10565).